Consider the following 436-residue polypeptide: tRNA(Ile)-lysidine synthase (436 aa).

27-32 (SGGVDS) serves as a coordination point for ATP.

It belongs to the tRNA(Ile)-lysidine synthase family.

It localises to the cytoplasm. It catalyses the reaction cytidine(34) in tRNA(Ile2) + L-lysine + ATP = lysidine(34) in tRNA(Ile2) + AMP + diphosphate + H(+). Functionally, ligates lysine onto the cytidine present at position 34 of the AUA codon-specific tRNA(Ile) that contains the anticodon CAU, in an ATP-dependent manner. Cytidine is converted to lysidine, thus changing the amino acid specificity of the tRNA from methionine to isoleucine. This is tRNA(Ile)-lysidine synthase from Vibrio vulnificus (strain YJ016).